We begin with the raw amino-acid sequence, 193 residues long: dCTP deaminase (193 aa).

DCTP-binding positions include 110–115, aspartate 128, 136–138, tyrosine 171, lysine 178, and glutamine 182; these read RSSLAR and VLE. Catalysis depends on glutamate 138, which acts as the Proton donor/acceptor. The segment at 169–193 is disordered; the sequence is RPYNRRQDAKYRDQQGAVASRIDKD.

It belongs to the dCTP deaminase family. In terms of assembly, homotrimer.

It catalyses the reaction dCTP + H2O + H(+) = dUTP + NH4(+). The protein operates within pyrimidine metabolism; dUMP biosynthesis; dUMP from dCTP (dUTP route): step 1/2. Functionally, catalyzes the deamination of dCTP to dUTP. This chain is dCTP deaminase, found in Cronobacter sakazakii (strain ATCC BAA-894) (Enterobacter sakazakii).